Here is a 237-residue protein sequence, read N- to C-terminus: Sensory rhodopsin-2 (237 aa).

Residues 1 to 2 are Extracellular-facing; it reads MA. Residues 3–23 form a helical membrane-spanning segment; it reads LTTWFWVGAVGMLAGTVLPIR. Topologically, residues 24-31 are cytoplasmic; the sequence is DCIRHPSH. A helical membrane pass occupies residues 32–53; the sequence is RRYDLVLAGITGLAAIAYTTMG. The Extracellular portion of the chain corresponds to 54–67; sequence LGITATTVGDRTVY. The helical transmembrane segment at 68 to 89 threads the bilayer; it reads LARYIDWLVTTPLIVLYLAMLA. Over 90-92 the chain is Cytoplasmic; sequence RPG. Residues 93 to 115 traverse the membrane as a helical segment; that stretch reads HRTSAWLLAADVFVIAAGIAAAL. At 116 to 119 the chain is on the extracellular side; it reads TTGV. A helical transmembrane segment spans residues 120–147; it reads QRWLFFAVGAAGYAALLYGLLGTLPRAL. Residues 148 to 150 lie on the Cytoplasmic side of the membrane; the sequence is GDD. The chain crosses the membrane as a helical span at residues 151–178; that stretch reads PRVRSLFVTLRNITVVLWTLYPVVWLLS. The Extracellular portion of the chain corresponds to 179–186; the sequence is PAGIGILQ. A helical transmembrane segment spans residues 187 to 214; that stretch reads TEMYTIVVVYLDFISKVAFVAFAVLGAD. At lysine 202 the chain carries N6-(retinylidene)lysine. At 215–237 the chain is on the cytoplasmic side; the sequence is AVSRLVAADAAAPATAEPTPDGD.

The protein belongs to the archaeal/bacterial/fungal opsin family. Interacts with HTR-II.

Its subcellular location is the cell membrane. Photophobic photoreceptor responsible for the negative phototaxis. Activates the sensory rhodopsin II transducer (HTR-II) in response to blue light. This chain is Sensory rhodopsin-2 (sop2), found in Halobacterium salinarum (strain ATCC 700922 / JCM 11081 / NRC-1) (Halobacterium halobium).